Consider the following 328-residue polypeptide: Serine/threonine-protein phosphatase PP2A-2 catalytic subunit (328 aa).

The Mn(2+) site is built by Asp76, His78, Asp104, and Asn136. The active-site Proton donor is the His137. Mn(2+) is bound by residues His186 and His260. Leu328 carries the leucine methyl ester modification.

The protein belongs to the PPP phosphatase family. PP-2A subfamily. Mn(2+) serves as cofactor.

It carries out the reaction O-phospho-L-seryl-[protein] + H2O = L-seryl-[protein] + phosphate. The catalysed reaction is O-phospho-L-threonyl-[protein] + H2O = L-threonyl-[protein] + phosphate. This chain is Serine/threonine-protein phosphatase PP2A-2 catalytic subunit (PP2A-2), found in Blumeria hordei (Barley powdery mildew).